The following is a 132-amino-acid chain: Small ribosomal subunit protein uS8 (132 aa).

Belongs to the universal ribosomal protein uS8 family. As to quaternary structure, part of the 30S ribosomal subunit. Contacts proteins S5 and S12.

Its function is as follows. One of the primary rRNA binding proteins, it binds directly to 16S rRNA central domain where it helps coordinate assembly of the platform of the 30S subunit. This is Small ribosomal subunit protein uS8 from Mycobacterium sp. (strain KMS).